The chain runs to 747 residues: Transcription factor phm2 (747 aa).

The segment at residues 21 to 50 (CNACRKRKRVRCDRLHPCSNCASRGLGSTC) is a DNA-binding region (zn(2)-C6 fungal-type). 2 disordered regions span residues 112-150 (GLQNQGSDARSDARCQPTPLSSETEFEYPVAPSPSDHGS) and 414-436 (TAEPRNLYDTDFDEDSSALPESR).

Its subcellular location is the nucleus. Functionally, transcription factor that regulates the expression of the gene cluster that mediates the biosynthesis of the trans-fused decalin-containing tetramic acid phomasetin. The polypeptide is Transcription factor phm2 (Pyrenochaetopsis sp).